The following is a 216-amino-acid chain: NKG2-D type II integral membrane protein (216 aa).

The Cytoplasmic portion of the chain corresponds to methionine 1–serine 51. The chain crosses the membrane as a helical; Signal-anchor for type II membrane protein span at residues proline 52–threonine 72. Residues isoleucine 73–valine 216 are Extracellular-facing. Intrachain disulfides connect cysteine 96-cysteine 105 and cysteine 99-cysteine 110. The C-type lectin domain occupies proline 98–glutamine 213. Asparagine 115, asparagine 131, asparagine 163, and asparagine 202 each carry an N-linked (GlcNAc...) asparagine glycan. Intrachain disulfides connect cysteine 127-cysteine 211 and cysteine 189-cysteine 203.

In terms of assembly, homodimer; disulfide-linked. Heterohexamer composed of two subunits of KLRK1 and four subunits of HCST/DAP10. Interacts (via transmembrane domain) with HCST/DAP10 (via transmembrane domain); the interaction is required for KLRK1 NK cell surface and induces NK cell-mediated cytotoxicity. Can form disulfide-bonded heterodimer with CD94. Interacts with CEACAM1; recruits PTPN6 that dephosphorylates VAV1. Natural killer cells.

It localises to the cell membrane. Functionally, functions as an activating and costimulatory receptor involved in immunosurveillance upon binding to various cellular stress-inducible ligands displayed at the surface of autologous tumor cells and virus-infected cells. Provides both stimulatory and costimulatory innate immune responses on activated killer (NK) cells, leading to cytotoxic activity. Acts as a costimulatory receptor for T-cell receptor (TCR) in CD8(+) T-cell-mediated adaptive immune responses by amplifying T-cell activation. Stimulates perforin-mediated elimination of ligand-expressing tumor cells. Signaling involves calcium influx, culminating in the expression of TNF-alpha. Participates in NK cell-mediated bone marrow graft rejection. May play a regulatory role in differentiation and survival of NK cells. Binds to ligands belonging to various subfamilies of MHC class I-related glycoproteins. In Macaca fascicularis (Crab-eating macaque), this protein is NKG2-D type II integral membrane protein (KLRK1).